The sequence spans 198 residues: Probable GTP-binding protein EngB (198 aa).

Residues 21 to 195 (NFSEVAFLGR…EDIIINQTLG (175 aa)) form the EngB-type G domain. GTP contacts are provided by residues 29–36 (GRSNVGKS), 56–60 (GKTQL), 81–84 (DLPG), 151–154 (TKCD), and 174–176 (VSN). Ser-36 and Thr-58 together coordinate Mg(2+).

The protein belongs to the TRAFAC class TrmE-Era-EngA-EngB-Septin-like GTPase superfamily. EngB GTPase family. Mg(2+) serves as cofactor.

Its function is as follows. Necessary for normal cell division and for the maintenance of normal septation. This chain is Probable GTP-binding protein EngB, found in Campylobacter jejuni (strain RM1221).